We begin with the raw amino-acid sequence, 115 residues long: Guanylin (115 aa).

The signal sequence occupies residues 1–21 (MNACVLSVLCLLGAVAVLVEG). Residues 22–100 (VTVQDGDLSF…LQRLEAIAQD (79 aa)) constitute a propeptide that is removed on maturation. 3 disulfides stabilise this stretch: cysteine 69–cysteine 82, cysteine 104–cysteine 112, and cysteine 107–cysteine 115.

Belongs to the guanylin family.

It is found in the secreted. In terms of biological role, endogenous activator of intestinal guanylate cyclase. It stimulates this enzyme through the same receptor binding region as the heat-stable enterotoxins. The polypeptide is Guanylin (GUCA2A) (Notomys alexis (Spinifex hopping mouse)).